Reading from the N-terminus, the 293-residue chain is Small ribosomal subunit protein uS2 (293 aa).

Residues 265-293 (DGGDWAASSAPAPGGENWAEAQPAEGAKW) form a disordered region.

It belongs to the universal ribosomal protein uS2 family. In terms of assembly, component of the small ribosomal subunit. Mature ribosomes consist of a small (40S) and a large (60S) subunit. The 40S subunit contains about 33 different proteins and 1 molecule of RNA (18S). The 60S subunit contains about 49 different proteins and 3 molecules of RNA (25S, 5.8S and 5S). Interacts with rps21.

The protein resides in the cytoplasm. Its function is as follows. Required for the assembly and/or stability of the 40S ribosomal subunit. Required for the processing of the 20S rRNA-precursor to mature 18S rRNA in a late step of the maturation of 40S ribosomal subunits. This Emericella nidulans (strain FGSC A4 / ATCC 38163 / CBS 112.46 / NRRL 194 / M139) (Aspergillus nidulans) protein is Small ribosomal subunit protein uS2 (rps0).